The following is a 69-amino-acid chain: Putative antitoxin AF_1481 (69 aa).

The protein belongs to the UPF0330 family.

Its function is as follows. Possibly the antitoxin component of a type II toxin-antitoxin (TA) system. This Archaeoglobus fulgidus (strain ATCC 49558 / DSM 4304 / JCM 9628 / NBRC 100126 / VC-16) protein is Putative antitoxin AF_1481.